The sequence spans 171 residues: Ribosome maturation factor RimM (171 aa).

The PRC barrel domain occupies 93–167 (DGVYYYKDIF…KVYVELMEGL (75 aa)).

It belongs to the RimM family. Binds ribosomal protein uS19.

It localises to the cytoplasm. Functionally, an accessory protein needed during the final step in the assembly of 30S ribosomal subunit, possibly for assembly of the head region. Essential for efficient processing of 16S rRNA. May be needed both before and after RbfA during the maturation of 16S rRNA. It has affinity for free ribosomal 30S subunits but not for 70S ribosomes. The protein is Ribosome maturation factor RimM of Lactobacillus helveticus (strain DPC 4571).